The chain runs to 471 residues: FAD-dependent monooxygenase andE (471 aa).

3 residues coordinate FAD: Glu35, Gly49, and Arg108. The active site involves Tyr216. FAD is bound by residues Asp308 and Ala321. 2 helical membrane-spanning segments follow: residues 403 to 423 (LANI…LPFP) and 443 to 463 (TPFA…LLGL).

The protein belongs to the paxM FAD-dependent monooxygenase family. The cofactor is FAD.

Its subcellular location is the membrane. It functions in the pathway secondary metabolite biosynthesis; terpenoid biosynthesis. Functionally, FAD-dependent monooxygenase; part of the gene cluster that mediates the biosynthesis of anditomin, a fungal meroterpenoid. The first step of the pathway is the synthesis of 3,5-dimethylorsellinic acid (DMOA) by the polyketide synthase andM. DMOA is then converted to the phthalide compound 5,7-dihydroxy-4,6-dimethylphthalide (DHDMP) by the cytochrome P450 monooxygenase andK, which is further prenylated by the prenyltransferase andD to yield farnesyl-DHDMP. Further epoxidation by the FAD-dependent monooxygenase andE leads to epoxyfarnesyl-DHDMP. The next step involves the terpene cyclase andB that converts epoxyfarnesyl-DHDMP into preandiloid A through opening of the epoxide ring followed by the cyclization of the farnesyl moiety. Preandiloid A is in turn oxidized at the C-3 hydroxyl group to yield preandiloid B by the dehydrogenase andC. The dioxygenase andA is solely responsible for the dehydrogenation of preandiloid B leading to the enone preandiloid C, as well as for the intriguing structural rearrangement to generate the bicyclo[2.2.2]octane core, transforming preandiloid C into andiconin. FAD-binding monooxygenase andJ then produces andilesin D which is reduced by dehydrogenase andI to yield andilesin A. Action of acetyltransferase andG followed by a spontaneous acetate elimination leads then to andilesin B, which is in turn substrate of the short chain dehydrogenase andH to yield andilesin C. Finally, the dioxygenase andF catalyzes the transformation of andilesin C to anditomin. The protein is FAD-dependent monooxygenase andE of Emericella variicolor (Aspergillus stellatus).